The following is a 246-amino-acid chain: Ribonuclease 3 (246 aa).

Positions 16–146 constitute an RNase III domain; sequence ATELEAGIGY…LLAAVYLDGG (131 aa). Glu59 contacts Mg(2+). Asp63 is a catalytic residue. The Mg(2+) site is built by Asn132 and Glu135. The active site involves Glu135. Residues 173–242 form the DRBM domain; it reads DFKTEFQEMV…ARQVLARFAA (70 aa).

The protein belongs to the ribonuclease III family. Homodimer. Requires Mg(2+) as cofactor.

The protein localises to the cytoplasm. The catalysed reaction is Endonucleolytic cleavage to 5'-phosphomonoester.. Digests double-stranded RNA. Involved in the processing of primary rRNA transcript to yield the immediate precursors to the large and small rRNAs (23S and 16S). Processes some mRNAs, and tRNAs when they are encoded in the rRNA operon. Processes pre-crRNA and tracrRNA of type II CRISPR loci if present in the organism. In Geobacter metallireducens (strain ATCC 53774 / DSM 7210 / GS-15), this protein is Ribonuclease 3.